A 232-amino-acid chain; its full sequence is Izumo sperm-egg fusion protein 4 (232 aa).

Residues 1–15 form the signal peptide; sequence MALLLCLVCLTAALA. N-linked (GlcNAc...) asparagine glycans are attached at residues asparagine 24 and asparagine 219.

The protein belongs to the Izumo family. Detected in sperm.

The protein localises to the secreted. The sequence is that of Izumo sperm-egg fusion protein 4 (IZUMO4) from Homo sapiens (Human).